The chain runs to 294 residues: Non-selective voltage-gated ion channel VDAC2 (294 aa).

A2 carries the post-translational modification N-acetylalanine. ATP contacts are provided by K23 and K31. At K31 the chain carries N6-acetyllysine; alternate. N6-succinyllysine; alternate is present on K31. K31 is covalently cross-linked (Glycyl lysine isopeptide (Lys-Gly) (interchain with G-Cter in ubiquitin); alternate). A run of 2 beta stranded transmembrane segments spans residues 37-46 (LVKLDVKTKS) and 50-58 (VEFSTSGSS). K64 is covalently cross-linked (Glycyl lysine isopeptide (Lys-Gly) (interchain with G-Cter in ubiquitin)). Residues 65 to 75 (VTGTLETKYKW) traverse the membrane as a beta stranded segment. Position 78 is a phosphotyrosine (Y78). 3 beta stranded membrane-spanning segments follow: residues 80-87 (LTFTEKWN), 91-100 (TLGTEIAIED), and 106-115 (LKLTFDTTFS). Position 118 is a phosphothreonine (T118). N6-acetyllysine; alternate is present on K120. Residue K120 forms a Glycyl lysine isopeptide (Lys-Gly) (interchain with G-Cter in ubiquitin); alternate linkage. A Glycyl lysine isopeptide (Lys-Gly) (interchain with G-Cter in ubiquitin) cross-link involves residue K121. The next 4 beta stranded transmembrane spans lie at 122–131 (SGKIKSSYKR), 134–141 (VNLGCDVD), 148–156 (AIHGSAVFG), and 161–169 (LAGYQMTFD). K172 is covalently cross-linked (Glycyl lysine isopeptide (Lys-Gly) (interchain with G-Cter in ubiquitin)). 6 beta stranded membrane-spanning segments follow: residues 174-186 (KLTRNNFAVGYRT), 189-196 (FQLHTNVN), 200-209 (EFGGSIYQKV), 213-222 (LDTSVNLAWT), 229-238 (RFGIAAKYQL), and 242-249 (ASISAKVN). S251 is subject to Phosphoserine. NAD(+)-binding positions include 253-255 (LIG) and 271-275 (SALVD). A run of 2 beta stranded transmembrane segments spans residues 253–262 (LIGVGYTQTL) and 265–274 (GVKLTLSALV). K277 bears the N6-acetyllysine; alternate mark. K277 is covalently cross-linked (Glycyl lysine isopeptide (Lys-Gly) (interchain with G-Cter in ubiquitin); alternate). The beta stranded transmembrane segment at 284–293 (HKLGLALELE) threads the bilayer.

The protein belongs to the eukaryotic mitochondrial porin family. As to quaternary structure, monomer, homodimer and higher order oligomers; formation of higher order structures is necessary for scramblase activity. Interacts with ARMC12 in a TBC1D21-dependent manner. Interacts with KLC3. Interacts with SPATA33. Interacts with PPP3CC in a SPATA33-dependent manner. Post-translationally, ubiquitinated by PRKN during mitophagy, leading to its degradation and enhancement of mitophagy. Deubiquitinated by USP30.

Its subcellular location is the mitochondrion outer membrane. The protein resides in the membrane. It carries out the reaction chloride(in) = chloride(out). It catalyses the reaction K(+)(in) = K(+)(out). The enzyme catalyses a 1,2-diacyl-sn-glycero-3-phospho-L-serine(in) = a 1,2-diacyl-sn-glycero-3-phospho-L-serine(out). The catalysed reaction is a 1,2-diacyl-sn-glycero-3-phosphocholine(in) = a 1,2-diacyl-sn-glycero-3-phosphocholine(out). It carries out the reaction a 1,2-diacyl-sn-glycero-3-phospho-(1D-myo-inositol)(in) = a 1,2-diacyl-sn-glycero-3-phospho-(1D-myo-inositol)(out). In terms of biological role, non-selective voltage-gated ion channel that mediates the transport of anions and cations through the mitochondrion outer membrane and plasma membrane. The channel adopts an open conformation at zero mV and a closed conformation at both positive and negative potentials. There are two populations of channels; the main that functions in a lower open-state conductance with lower ion selectivity, that switch, in a voltage-dependent manner, from the open to a low-conducting 'closed' state and the other that has a normal ion selectivity in the typical high conductance, 'open' state. Binds various lipids, including the sphingolipid ceramide, the phospholipid phosphatidylcholine, and the sterols cholesterol and oxysterol. Binding of ceramide promotes the mitochondrial outer membrane permeabilization (MOMP) apoptotic pathway. Its function is as follows. Catalyzes the scrambling of phospholipids across the outer mitochondrial membrane; the mechanism is unrelated to channel activity and is capable of translocating both anionic and zwitterionic phospholipids. This Sus scrofa (Pig) protein is Non-selective voltage-gated ion channel VDAC2.